Consider the following 251-residue polypeptide: Triosephosphate isomerase (251 aa).

9–11 (NWK) serves as a coordination point for substrate. His94 acts as the Electrophile in catalysis. Glu166 serves as the catalytic Proton acceptor. Residues Gly172, Ser211, and 232-233 (GG) each bind substrate.

The protein belongs to the triosephosphate isomerase family. As to quaternary structure, homodimer.

It localises to the cytoplasm. The catalysed reaction is D-glyceraldehyde 3-phosphate = dihydroxyacetone phosphate. It participates in carbohydrate biosynthesis; gluconeogenesis. The protein operates within carbohydrate degradation; glycolysis; D-glyceraldehyde 3-phosphate from glycerone phosphate: step 1/1. Its function is as follows. Involved in the gluconeogenesis. Catalyzes stereospecifically the conversion of dihydroxyacetone phosphate (DHAP) to D-glyceraldehyde-3-phosphate (G3P). The polypeptide is Triosephosphate isomerase (Stenotrophomonas maltophilia (strain R551-3)).